We begin with the raw amino-acid sequence, 234 residues long: Mitochondrial assembly of ribosomal large subunit protein 1 (234 aa).

The interval 63–88 is disordered; sequence SEPGLEERAEGTVNEGRPESDAADHT.

The protein belongs to the Iojap/RsfS family. Associates with the mitochondrial ribosome large subunit (39S) via interaction with MRPL12 and/or MRPL14. The interaction generates steric hindrance that is expected to prevent premature association of the 28S and 39S ribosomal subunits. Interacts with intermediates of the mitochondrial ribosome large subunit (mt-LSU) (recruits the mitochondrial ribosome and complex I assembly factor AltMIEF1 and NDUFAB1); regulates mitochondrial ribosomes assembly. Interacts with MRPL12 and MRPL14.

It localises to the mitochondrion matrix. Its function is as follows. Required for normal mitochondrial ribosome function and mitochondrial translation. May play a role in ribosome biogenesis by preventing premature association of the 28S and 39S ribosomal subunits. Interacts with mitochondrial ribosomal protein uL14m (MRPL14), probably blocking formation of intersubunit bridge B8, preventing association of the 28S and 39S ribosomal subunits. Addition to isolated mitochondrial ribosomal subunits partially inhibits translation, probably by interfering with the association of the 28S and 39S ribosomal subunits and the formation of functional ribosomes. May also participate in the assembly and/or regulation of the stability of the large subunit of the mitochondrial ribosome. May function as a ribosomal silencing factor. The sequence is that of Mitochondrial assembly of ribosomal large subunit protein 1 (MALSU1) from Homo sapiens (Human).